We begin with the raw amino-acid sequence, 139 residues long: D-ribose pyranase (139 aa).

Residue His20 is the Proton donor of the active site. Substrate contacts are provided by residues Asp28, His106, and 128 to 130 (YAN).

This sequence belongs to the RbsD / FucU family. RbsD subfamily. As to quaternary structure, homodecamer.

It localises to the cytoplasm. The enzyme catalyses beta-D-ribopyranose = beta-D-ribofuranose. Its pathway is carbohydrate metabolism; D-ribose degradation; D-ribose 5-phosphate from beta-D-ribopyranose: step 1/2. Its function is as follows. Catalyzes the interconversion of beta-pyran and beta-furan forms of D-ribose. The chain is D-ribose pyranase from Aeromonas salmonicida (strain A449).